The chain runs to 416 residues: Tyrosine--tRNA ligase (416 aa).

Position 40 (Tyr40) interacts with L-tyrosine. The 'HIGH' region signature appears at 45 to 54; sequence ATAKSLHVGS. Residues Tyr177 and Gln181 each coordinate L-tyrosine. The 'KMSKS' region motif lies at 237–241; sequence KMGKS. Position 240 (Lys240) interacts with ATP. One can recognise an S4 RNA-binding domain in the interval 351-415; the sequence is ISIVQLIVKS…GKKRHAMVQL (65 aa).

Belongs to the class-I aminoacyl-tRNA synthetase family. TyrS type 1 subfamily. As to quaternary structure, homodimer.

The protein localises to the cytoplasm. It catalyses the reaction tRNA(Tyr) + L-tyrosine + ATP = L-tyrosyl-tRNA(Tyr) + AMP + diphosphate + H(+). In terms of biological role, catalyzes the attachment of tyrosine to tRNA(Tyr) in a two-step reaction: tyrosine is first activated by ATP to form Tyr-AMP and then transferred to the acceptor end of tRNA(Tyr). In Roseobacter denitrificans (strain ATCC 33942 / OCh 114) (Erythrobacter sp. (strain OCh 114)), this protein is Tyrosine--tRNA ligase.